The following is a 785-amino-acid chain: MPIGNPINTNDIKSNRMRQESNMSAVSNSESTIGQSTQQQQQQQQYLGQSVQPLMPVSYQYVVPEQWPYPQYYQQPQSQSQQQLQSQPQMYQVQESFQSSGSDSNASNPPSTSVGVPSNATATALPNGSAITTKKSNNSTNISNNVPYYYYFPQMQAQQSMAYSYPQAYYYYPANGDGTTNGATPSVTSNQVQNPNLEKTYSTFEQQQQHQQQQQLQAQTYPAQPPKIGNAFSKFSKSGPPSDSSSGSMSPNSNRTSRNSNSISSLAQQPPMSNYPQPSTYQYPGFHKTSSIPNSHSPIPPRSLTTPTQGPTSQNGPLSYNLPQVGLLPPQQQQQVSPLYDGNSITPPVKPSTDQETYLTANRHGVSDQQYDSMAKTMNSFQTTTIRHPMPLIATTNATGSNTSGTSASIIRPRVTTTMWEDEKTLCYQVEANGISVVRRADNDMVNGTKLLNVTKMTRGRRDGILKAEKIRHVVKIGSMHLKGVWIPFERALAIAQREKIADYLYPLFIRDIQSVLKQNNPSNDSSSSSSSTGIKSISPRTYYQPINNYQNPNGPSNISAAQLTYSSMNLNNKIIPNNSIPAVSTIAAGEKPLKKCTMPNSNQLEGHTITNLQTLSATMPMKQQLMGNIASPLSYPRNATMNSASTLGITPADSKPLTPSPTTTNTNQSSESNVGSIHTGITLPRVESESASHSKWSKEADSGNTVPDNQTLKEPRSSQLPISALTSTDTDKIKTSTSDEATQPNEPSEAEPVKESESSKSQVDGAGDVSNEEIAADDTKKQEK.

Polar residues-rich tracts occupy residues 1-12 (MPIGNPINTNDI) and 20-37 (ESNM…GQST). Disordered stretches follow at residues 1–45 (MPIG…QQQQ), 78–121 (SQSQ…SNAT), and 202–355 (STFE…STDQ). Low complexity predominate over residues 78–94 (SQSQQQLQSQPQMYQVQ). A compositionally biased stretch (polar residues) spans 95-121 (ESFQSSGSDSNASNPPSTSVGVPSNAT). Composition is skewed to low complexity over residues 206 to 219 (QQQQ…LQAQ) and 232 to 265 (FSKF…SISS). Polar residues-rich tracts occupy residues 266–282 (LAQQ…STYQ) and 304–318 (LTTP…NGPL). Residues 322-339 (LPQVGLLPPQQQQQVSPL) show a composition bias toward low complexity. The HTH APSES-type domain occupies 414 to 520 (RVTTTMWEDE…RDIQSVLKQN (107 aa)). A DNA-binding region (H-T-H motif) is located at residues 448 to 469 (GTKLLNVTKMTRGRRDGILKAE). 2 disordered regions span residues 519–538 (QNNP…IKSI) and 642–785 (MNSA…KQEK). Composition is skewed to low complexity over residues 523–538 (SNDS…IKSI) and 655–674 (SKPL…SESN). Positions 687-702 (VESESASHSKWSKEAD) are enriched in basic and acidic residues. Phosphoserine is present on S771.

The protein belongs to the EFG1/PHD1/stuA family.

Its subcellular location is the nucleus. Plays a general regulatory role in the cyclic AMP-dependent protein kinase-stimulated (PKA) signal transduction pathway by regulating the expression of genes important in growth and development. May inhibit the switch from unicellular to filamentous growth. The sequence is that of Protein SOK2 (SOK2) from Saccharomyces cerevisiae (strain ATCC 204508 / S288c) (Baker's yeast).